The chain runs to 145 residues: Galectin-5 (145 aa).

Ser2 carries the post-translational modification N-acetylserine. The Galectin domain occupies 17–145 (FFTSIPNGLY…GDIQLTHVET (129 aa)). An a beta-D-galactoside-binding site is contributed by 77-83 (WGPEERS).

As to quaternary structure, monomer. In terms of tissue distribution, erythrocytes.

In terms of biological role, may function in erythrocyte differentiation. The chain is Galectin-5 (Lgals5) from Rattus norvegicus (Rat).